The following is a 481-amino-acid chain: Alpha-ketoglutaric semialdehyde dehydrogenase 1 (481 aa).

NADP(+) contacts are provided by residues 154–155 (WN), 178–181 (KAPE), and 231–232 (GS). Residue Glu-253 is the Proton acceptor of the active site. Position 254 (Leu-254) interacts with NADP(+). Catalysis depends on Cys-287, which acts as the Nucleophile. Glu-384 lines the NADP(+) pocket.

The protein belongs to the aldehyde dehydrogenase family. In terms of assembly, homotetramer.

The catalysed reaction is 2,5-dioxopentanoate + NADP(+) + H2O = 2-oxoglutarate + NADPH + 2 H(+). The enzyme catalyses 2,5-dioxopentanoate + NAD(+) + H2O = 2-oxoglutarate + NADH + 2 H(+). It carries out the reaction succinate semialdehyde + NAD(+) + H2O = succinate + NADH + 2 H(+). Functionally, catalyzes the NAD(P)(+)-dependent oxidation of alpha-ketoglutaric semialdehyde (alphaKGSA) to alpha-ketoglutarate. Is involved in a degradation pathway of L-arabinose that allows A.brasilense to grow on L-arabinose as a sole carbon source. Prefers NAD(+) to NADP(+) as a cosubstrate. Displays broad substrate specificity: exhibits the highest activity with alphaKGSA and succinic semialdehyde as substrates, but to a lesser extent, is also active with glutaraldehyde, benzaldehyde, and a number of aldehydes from C3 to C8. The sequence is that of Alpha-ketoglutaric semialdehyde dehydrogenase 1 (araE) from Azospirillum brasilense.